Reading from the N-terminus, the 152-residue chain is MSKVTGIVTELITPIVEEVGLELVDIEYKKEGSNWFLRVFIDNETGNIDIDDCRLVSEKLSEKLDEVDPIPTAYFLEVSSPGAERPLRKDKDFTKAVGRNVHITTKEPIEGATTFEGELVSYEDGKLTVKEAKKTYVISQEQIDTARMAIIF.

The protein belongs to the RimP family.

It localises to the cytoplasm. Its function is as follows. Required for maturation of 30S ribosomal subunits. The protein is Ribosome maturation factor RimP of Brevibacillus brevis (strain 47 / JCM 6285 / NBRC 100599).